The sequence spans 343 residues: 4-hydroxy-2-oxovalerate aldolase (343 aa).

In terms of domain architecture, Pyruvate carboxyltransferase spans 5-256 (ILLCDPTLRD…ETGIDLYKIL (252 aa)). 13-14 (RD) contributes to the substrate binding site. Asp-14 serves as a coordination point for Mn(2+). His-17 functions as the Proton acceptor in the catalytic mechanism. Positions 168 and 195 each coordinate substrate. Mn(2+)-binding residues include His-195 and His-197.

It belongs to the 4-hydroxy-2-oxovalerate aldolase family. In terms of assembly, interacts with MhpF.

It carries out the reaction (S)-4-hydroxy-2-oxopentanoate = acetaldehyde + pyruvate. It functions in the pathway aromatic compound metabolism; 3-phenylpropanoate degradation. Its function is as follows. Catalyzes the retro-aldol cleavage of 4-hydroxy-2-oxopentanoate to pyruvate and acetaldehyde. Is involved in the meta-cleavage pathway for the degradation of aromatic compounds. This chain is 4-hydroxy-2-oxovalerate aldolase, found in Pectobacterium atrosepticum (strain SCRI 1043 / ATCC BAA-672) (Erwinia carotovora subsp. atroseptica).